Reading from the N-terminus, the 322-residue chain is Myeloid-associated differentiation marker (322 aa).

Residues M1–I25 are disordered. Residue S22 is modified to Phosphoserine. 2 consecutive MARVEL domains span residues A31–G163 and Y168–F319. 8 helical membrane-spanning segments follow: residues L41–T61, F70–L90, F101–P121, A137–W157, T171–I191, L203–L223, F239–P259, and L294–S314.

It belongs to the MAL family.

It localises to the membrane. This chain is Myeloid-associated differentiation marker (MYADM), found in Pongo abelii (Sumatran orangutan).